The following is a 462-amino-acid chain: Argininosuccinate lyase (462 aa).

The protein belongs to the lyase 1 family. Argininosuccinate lyase subfamily.

It localises to the cytoplasm. The catalysed reaction is 2-(N(omega)-L-arginino)succinate = fumarate + L-arginine. The protein operates within amino-acid biosynthesis; L-arginine biosynthesis; L-arginine from L-ornithine and carbamoyl phosphate: step 3/3. This chain is Argininosuccinate lyase, found in Leuconostoc citreum (strain KM20).